A 346-amino-acid polypeptide reads, in one-letter code: Porin Omp2a (346 aa).

The N-terminal stretch at 1–22 is a signal peptide; sequence MNIKSLLLGSAAALVAASGAQA.

This sequence belongs to the alphaproteobacteria porin family. As to quaternary structure, monomer.

The protein resides in the cell outer membrane. Forms passive diffusion pores that allow small molecular weight hydrophilic materials across the outer membrane. This chain is Porin Omp2a (omp2a), found in Brucella ovis.